We begin with the raw amino-acid sequence, 366 residues long: DNA-directed RNA polymerase subunit alpha (366 aa).

Positions 1–233 (MVREKVRVST…DLFLPFLHAE (233 aa)) are alpha N-terminal domain (alpha-NTD). The tract at residues 264 to 366 (KNEIALKSIF…KDEMGFESLE (103 aa)) is alpha C-terminal domain (alpha-CTD).

It belongs to the RNA polymerase alpha chain family. As to quaternary structure, in plastids the minimal PEP RNA polymerase catalytic core is composed of four subunits: alpha, beta, beta', and beta''. When a (nuclear-encoded) sigma factor is associated with the core the holoenzyme is formed, which can initiate transcription.

It localises to the plastid. Its subcellular location is the chloroplast. It carries out the reaction RNA(n) + a ribonucleoside 5'-triphosphate = RNA(n+1) + diphosphate. In terms of biological role, DNA-dependent RNA polymerase catalyzes the transcription of DNA into RNA using the four ribonucleoside triphosphates as substrates. In Oenothera elata subsp. hookeri (Hooker's evening primrose), this protein is DNA-directed RNA polymerase subunit alpha.